Reading from the N-terminus, the 323-residue chain is Leucine-rich repeat-containing protein 46 (323 aa).

LRR repeat units lie at residues 49-70 (DLET…ERLR), 71-92 (NIHS…ACIT), 93-114 (SLRF…LDLQ), and 115-135 (YLQF…DELP). The LRRCT domain maps to 146–188 (NPCTNQDGYRKMVIGALPLLLDLDKQPILERWTSDEEDKSSDE). Position 178 is a phosphothreonine (Thr178). Residues Ser179, Ser185, and Ser186 each carry the phosphoserine modification. The stretch at 203–228 (RGFFKDLEQELHQHQERRQQAALTEH) forms a coiled coil. The segment at 252 to 323 (DCSPAVTEEP…TKSTNKRGTK (72 aa)) is disordered. Residues 269–290 (ATSSTQMASSSKKQVPRNQKGS) are compositionally biased toward polar residues. The segment covering 297–310 (ALAATASKTSLAAA) has biased composition (low complexity). Ser303 carries the phosphoserine modification.

The protein localises to the cell projection. It is found in the cilium. The protein resides in the flagellum. Functionally, required for normal spermatogenesis and male fertility. Plays an important role in sperm flagellum biogenesis. This is Leucine-rich repeat-containing protein 46 (Lrrc46) from Rattus norvegicus (Rat).